We begin with the raw amino-acid sequence, 54 residues long: Large ribosomal subunit protein bL33 (54 aa).

This sequence belongs to the bacterial ribosomal protein bL33 family.

This chain is Large ribosomal subunit protein bL33, found in Stenotrophomonas maltophilia (strain R551-3).